The following is a 293-amino-acid chain: MAMVVFLLLYLCGHPQAAADNIQTLYVPSGESMEMPCPSPPSLLGGQLLTWFRSPVSGSSTILVAQVQVDRPISDLGKADPDSRFKVLGNYSLRLEGSRDEDAGRYWCTVMDQNHKYQNWRVYDVSVLKGSQFSVKSPDGLSCSALLCSVVPARRLDSVTWLEGRNPVRGHAQYFWGEGAALLLVCPTEGVPETRSRRPRNIRCLMPQNKRFSFSVAAPAEPPPTVCAPLPSWDVSWILMLLFAAGQGVTIIALSIVIWRHQRAQGTQDREPSIPHFKPEVQVYENIHLARLR.

The signal sequence occupies residues 1 to 19 (MAMVVFLLLYLCGHPQAAA). The 105-residue stretch at 20 to 124 (DNIQTLYVPS…HKYQNWRVYD (105 aa)) folds into the Ig-like V-type domain. At 20–237 (DNIQTLYVPS…APLPSWDVSW (218 aa)) the chain is on the extracellular side. Residues cysteine 37 and cysteine 108 are joined by a disulfide bond. An N-linked (GlcNAc...) asparagine glycan is attached at asparagine 90. A helical membrane pass occupies residues 238–258 (ILMLLFAAGQGVTIIALSIVI). Residues 259-293 (WRHQRAQGTQDREPSIPHFKPEVQVYENIHLARLR) lie on the Cytoplasmic side of the membrane. Position 284 is a phosphotyrosine (tyrosine 284).

Homodimer; disulfide-linked. Interacts with GRB2 and GRB7 in a phosphorylation-dependent manner. In terms of processing, N-glycosylated.

The protein resides in the cell membrane. In terms of biological role, may play a role in the downstream signal transduction pathways involving GRB2 and GRB7. The protein is Lymphocyte antigen 6 complex locus protein G6f (Ly6g6f) of Rattus norvegicus (Rat).